The primary structure comprises 464 residues: RYamide receptor (464 aa).

At 1–105 (MEHHNSHLLP…EDMWSSAYFK (105 aa)) the chain is on the extracellular side. Asparagine 49, asparagine 79, and asparagine 85 each carry an N-linked (GlcNAc...) asparagine glycan. Residues 106-126 (IIVYMLYIPIFIFALIGNGTV) traverse the membrane as a helical segment. The Cytoplasmic segment spans residues 127–148 (CYIVYSTPRMRTVTNYFIASLA). Residues 149-169 (IGDILMSFFCVPSSFISLFIL) form a helical membrane-spanning segment. Topologically, residues 170 to 189 (NYWPFGLALCHFVNYSQAVS) are extracellular. Asparagine 183 carries an N-linked (GlcNAc...) asparagine glycan. Residues 190–210 (VLVSAYTLVAISIDRYIAIMW) form a helical membrane-spanning segment. Over 211 to 221 (PLKPRITKRYA) the chain is Cytoplasmic. Residues 222 to 242 (TFIIAGVWFIALATALPIPIV) traverse the membrane as a helical segment. Residues 243 to 274 (SGLDIPMSPWHTKCEKYICREMWPSRTQEYYY) are Extracellular-facing. Residues 275-295 (TLSLFALQFVVPLGVLIFTYA) traverse the membrane as a helical segment. Topologically, residues 296-329 (RITIRVWAKRPPGEAETNRDQRMARSKRKMVKMM) are cytoplasmic. The chain crosses the membrane as a helical span at residues 330–350 (LTVVIVFTCCWLPFNILQLLL). The Extracellular portion of the chain corresponds to 351–363 (NDEEFAHWDPLPY). A helical transmembrane segment spans residues 364–384 (VWFAFHWLAMSHCCYNPIIYC). Over 385-464 (YMNARFRSGF…LSCGETSPLR (80 aa)) the chain is Cytoplasmic.

Belongs to the G-protein coupled receptor 1 family.

The protein resides in the cell membrane. Its function is as follows. Receptor for the neuropeptides RYamide-1 and RYamide-2. The activity of this receptor is mediated by G proteins which activate a phosphatidyl-inositol-calcium second messenger system. RYamide signaling may suppress feeding behavior. This Drosophila melanogaster (Fruit fly) protein is RYamide receptor.